A 50-amino-acid polypeptide reads, in one-letter code: Sperm protamine P1 (50 aa).

The protein belongs to the protamine P1 family. Cross-linked by interchain disulfide bonds around the DNA-helix. Testis.

The protein localises to the nucleus. Its subcellular location is the chromosome. Functionally, protamines substitute for histones in the chromatin of sperm during the haploid phase of spermatogenesis. They compact sperm DNA into a highly condensed, stable and inactive complex. The sequence is that of Sperm protamine P1 (PRM1) from Saimiri sciureus (Common squirrel monkey).